Consider the following 158-residue polypeptide: Phosphopantetheine adenylyltransferase (158 aa).

Thr10 serves as a coordination point for substrate. Residues 10-11 (TF) and His18 each bind ATP. Substrate is bound by residues Lys42, Leu74, and Arg88. ATP-binding positions include 89-91 (GLR), Glu99, and 124-130 (NSFISST).

This sequence belongs to the bacterial CoaD family. In terms of assembly, homohexamer. It depends on Mg(2+) as a cofactor.

Its subcellular location is the cytoplasm. The enzyme catalyses (R)-4'-phosphopantetheine + ATP + H(+) = 3'-dephospho-CoA + diphosphate. Its pathway is cofactor biosynthesis; coenzyme A biosynthesis; CoA from (R)-pantothenate: step 4/5. Its function is as follows. Reversibly transfers an adenylyl group from ATP to 4'-phosphopantetheine, yielding dephospho-CoA (dPCoA) and pyrophosphate. The chain is Phosphopantetheine adenylyltransferase from Shewanella sediminis (strain HAW-EB3).